The sequence spans 165 residues: Acireductone dioxygenase (165 aa).

Fe(2+)-binding residues include His90, His92, Glu96, and His134. Ni(2+) is bound by residues His90, His92, Glu96, and His134.

Belongs to the acireductone dioxygenase (ARD) family. In terms of assembly, monomer. Fe(2+) is required as a cofactor. Requires Ni(2+) as cofactor.

It carries out the reaction 1,2-dihydroxy-5-(methylsulfanyl)pent-1-en-3-one + O2 = 3-(methylsulfanyl)propanoate + CO + formate + 2 H(+). The catalysed reaction is 1,2-dihydroxy-5-(methylsulfanyl)pent-1-en-3-one + O2 = 4-methylsulfanyl-2-oxobutanoate + formate + 2 H(+). The protein operates within amino-acid biosynthesis; L-methionine biosynthesis via salvage pathway; L-methionine from S-methyl-5-thio-alpha-D-ribose 1-phosphate: step 5/6. Catalyzes 2 different reactions between oxygen and the acireductone 1,2-dihydroxy-3-keto-5-methylthiopentene (DHK-MTPene) depending upon the metal bound in the active site. Fe-containing acireductone dioxygenase (Fe-ARD) produces formate and 2-keto-4-methylthiobutyrate (KMTB), the alpha-ketoacid precursor of methionine in the methionine recycle pathway. Ni-containing acireductone dioxygenase (Ni-ARD) produces methylthiopropionate, carbon monoxide and formate, and does not lie on the methionine recycle pathway. This is Acireductone dioxygenase from Rhodopseudomonas palustris (strain TIE-1).